The primary structure comprises 555 residues: Phosphomethylpyrimidine synthase (555 aa).

Positions 78 to 104 are disordered; the sequence is VRDRWGFDNGSAESTKGELSMSERKPR. Substrate contacts are provided by residues Asn191, Met220, Tyr249, His285, 305–307, 346–349, and Glu385; these read SRG and DALR. His389 is a binding site for Zn(2+). Tyr412 contributes to the substrate binding site. His453 lines the Zn(2+) pocket. [4Fe-4S] cluster is bound by residues Cys535, Cys538, and Cys543.

This sequence belongs to the ThiC family. Requires [4Fe-4S] cluster as cofactor.

It carries out the reaction 5-amino-1-(5-phospho-beta-D-ribosyl)imidazole + S-adenosyl-L-methionine = 4-amino-2-methyl-5-(phosphooxymethyl)pyrimidine + CO + 5'-deoxyadenosine + formate + L-methionine + 3 H(+). It participates in cofactor biosynthesis; thiamine diphosphate biosynthesis. Functionally, catalyzes the synthesis of the hydroxymethylpyrimidine phosphate (HMP-P) moiety of thiamine from aminoimidazole ribotide (AIR) in a radical S-adenosyl-L-methionine (SAM)-dependent reaction. The protein is Phosphomethylpyrimidine synthase of Chlorobaculum parvum (strain DSM 263 / NCIMB 8327) (Chlorobium vibrioforme subsp. thiosulfatophilum).